Consider the following 382-residue polypeptide: 8-amino-7-oxononanoate synthase (382 aa).

Arg26 provides a ligand contact to substrate. Pyridoxal 5'-phosphate is bound at residue 104-105 (GY). His129 contacts substrate. Pyridoxal 5'-phosphate-binding positions include Ser175, 200-203 (DEAH), and 232-235 (TLSK). Lys235 is subject to N6-(pyridoxal phosphate)lysine. Thr345 contributes to the substrate binding site.

This sequence belongs to the class-II pyridoxal-phosphate-dependent aminotransferase family. BioF subfamily. In terms of assembly, homodimer. Pyridoxal 5'-phosphate serves as cofactor.

It carries out the reaction 6-carboxyhexanoyl-[ACP] + L-alanine + H(+) = (8S)-8-amino-7-oxononanoate + holo-[ACP] + CO2. It participates in cofactor biosynthesis; biotin biosynthesis. Functionally, catalyzes the decarboxylative condensation of pimeloyl-[acyl-carrier protein] and L-alanine to produce 8-amino-7-oxononanoate (AON), [acyl-carrier protein], and carbon dioxide. This chain is 8-amino-7-oxononanoate synthase, found in Mycobacterium sp. (strain JLS).